A 626-amino-acid chain; its full sequence is PEX5-related protein (626 aa).

3 disordered regions span residues 1 to 20 (MYQG…LSSD), 118 to 167 (VSQT…SSLD), and 181 to 235 (KFHG…ASEL). The segment covering 181-198 (KFHGDRNTKGHPMAERKS) has biased composition (basic and acidic residues). At serine 205 the chain carries Phosphoserine. Positions 225-235 (SALNSESASEL) are enriched in low complexity. Phosphoserine is present on residues serine 253, serine 257, and serine 261. TPR repeat units follow at residues 326–359 (WPGA…DPGD), 360–393 (AEAW…QPNN), and 395–427 (KALM…NPKY). Phosphoserine occurs at positions 445 and 447. TPR repeat units lie at residues 474–507 (PDLQ…RPED), 509–541 (SLWN…QPGF), and 543–575 (RSRY…QRKS).

Belongs to the peroxisomal targeting signal receptor family. Interacts with RAB8B. Forms an obligate 4:4 complex with HCN2. May interact with the C-terminal PTS1-type tripeptide peroxisomal targeting signal (SKL-type); the relevance of such interaction is however unclear. Interacts with HCN3. Interacts with HCN4 with a 4:4 HCN4:PEX5L stoichiometry; reduces the effects of cAMP on the voltage-dependence and rate of activation of HCN4. In terms of tissue distribution, mainly expressed in brain. Also expressed in pancreas, testis and pituitary.

The protein resides in the cytoplasm. It localises to the membrane. Its function is as follows. Accessory subunit of hyperpolarization-activated cyclic nucleotide-gated (HCN) channels, regulating their cell-surface expression and cyclic nucleotide dependence. This Homo sapiens (Human) protein is PEX5-related protein (PEX5L).